A 446-amino-acid chain; its full sequence is Phosphoglucosamine mutase (446 aa).

Catalysis depends on S103, which acts as the Phosphoserine intermediate. Residues S103, D242, D244, and D246 each contribute to the Mg(2+) site. Residue S103 is modified to Phosphoserine.

Belongs to the phosphohexose mutase family. Requires Mg(2+) as cofactor. Activated by phosphorylation.

It carries out the reaction alpha-D-glucosamine 1-phosphate = D-glucosamine 6-phosphate. Catalyzes the conversion of glucosamine-6-phosphate to glucosamine-1-phosphate. The polypeptide is Phosphoglucosamine mutase (Corynebacterium urealyticum (strain ATCC 43042 / DSM 7109)).